We begin with the raw amino-acid sequence, 213 residues long: Glycerol-3-phosphate acyltransferase (213 aa).

The next 5 helical transmembrane spans lie at Ile3 to Ser23, Lys51 to Ala71, Asp78 to Phe98, Ala115 to Phe135, and Leu140 to Pro160.

Belongs to the PlsY family. Probably interacts with PlsX.

It localises to the cell inner membrane. It carries out the reaction an acyl phosphate + sn-glycerol 3-phosphate = a 1-acyl-sn-glycero-3-phosphate + phosphate. Its pathway is lipid metabolism; phospholipid metabolism. Its function is as follows. Catalyzes the transfer of an acyl group from acyl-phosphate (acyl-PO(4)) to glycerol-3-phosphate (G3P) to form lysophosphatidic acid (LPA). This enzyme utilizes acyl-phosphate as fatty acyl donor, but not acyl-CoA or acyl-ACP. This Burkholderia cenocepacia (strain HI2424) protein is Glycerol-3-phosphate acyltransferase.